The following is a 132-amino-acid chain: MKKTGILNSHLAKLADDLGHTDRVCIGDLGLPVPNGIPKIDLSLTSGIPSFQEVLDIYLENILVEKVILAEEIKEANPDQLSRLLAKLDNSVSIEYVSHNHLKQMTQDVKAVIRTGENTPYSNIILQSGVII.

His20 (proton donor) is an active-site residue. Substrate-binding positions include Asp28, His99, and 121-123; that span reads YSN.

Belongs to the RbsD / FucU family. RbsD subfamily. Homodecamer.

It localises to the cytoplasm. It carries out the reaction beta-D-ribopyranose = beta-D-ribofuranose. It functions in the pathway carbohydrate metabolism; D-ribose degradation; D-ribose 5-phosphate from beta-D-ribopyranose: step 1/2. Catalyzes the interconversion of beta-pyran and beta-furan forms of D-ribose. The polypeptide is D-ribose pyranase (Streptococcus agalactiae serotype V (strain ATCC BAA-611 / 2603 V/R)).